A 264-amino-acid polypeptide reads, in one-letter code: Thymidylate synthase (264 aa).

A dUMP-binding site is contributed by arginine 21. Position 51 (histidine 51) interacts with (6R)-5,10-methylene-5,6,7,8-tetrahydrofolate. Residue 126–127 (RR) coordinates dUMP. The active-site Nucleophile is the cysteine 146. DUMP contacts are provided by residues 166 to 169 (RSAD), asparagine 177, and 207 to 209 (HLY). Aspartate 169 provides a ligand contact to (6R)-5,10-methylene-5,6,7,8-tetrahydrofolate. Residue alanine 263 participates in (6R)-5,10-methylene-5,6,7,8-tetrahydrofolate binding.

Belongs to the thymidylate synthase family. Bacterial-type ThyA subfamily. As to quaternary structure, homodimer.

The protein resides in the cytoplasm. The enzyme catalyses dUMP + (6R)-5,10-methylene-5,6,7,8-tetrahydrofolate = 7,8-dihydrofolate + dTMP. It functions in the pathway pyrimidine metabolism; dTTP biosynthesis. Its function is as follows. Catalyzes the reductive methylation of 2'-deoxyuridine-5'-monophosphate (dUMP) to 2'-deoxythymidine-5'-monophosphate (dTMP) while utilizing 5,10-methylenetetrahydrofolate (mTHF) as the methyl donor and reductant in the reaction, yielding dihydrofolate (DHF) as a by-product. This enzymatic reaction provides an intracellular de novo source of dTMP, an essential precursor for DNA biosynthesis. The polypeptide is Thymidylate synthase (Rhizobium etli (strain ATCC 51251 / DSM 11541 / JCM 21823 / NBRC 15573 / CFN 42)).